Here is a 197-residue protein sequence, read N- to C-terminus: MKVTKAELAHVAVKAEQYPKNQLPELALAGRSNVGKSSFINKMLNRKGLARTSGQPGKTQTLNFYEINERLYFVDVPGYGYAKVSKTERAAWGKMIETYLSEREELKAVLQLVDIRHRPSEDDQLMYNWMKHYGIPVILVATKADKIPKGKWQKQLTAIAKTLDKEASDPLLFFSSATGLGKDEAWRTILNHLKVTE.

Residues 22–195 enclose the EngB-type G domain; sequence QLPELALAGR…WRTILNHLKV (174 aa). Residues 30-37, 57-61, 75-78, 142-145, and 174-176 each bind GTP; these read GRSNVGKS, GKTQT, DVPG, TKAD, and FSS. Mg(2+) is bound by residues S37 and T59.

This sequence belongs to the TRAFAC class TrmE-Era-EngA-EngB-Septin-like GTPase superfamily. EngB GTPase family. Mg(2+) is required as a cofactor.

Functionally, necessary for normal cell division and for the maintenance of normal septation. The polypeptide is Probable GTP-binding protein EngB (Shouchella clausii (strain KSM-K16) (Alkalihalobacillus clausii)).